We begin with the raw amino-acid sequence, 153 residues long: Nuclear cap-binding protein subunit 2 (153 aa).

MRNA is bound by residues tyrosine 17, tyrosine 40, 109 to 113 (RTDWD), 120 to 124 (RQYGR), and 130 to 131 (QV). Residues 37-115 (CTLYVGNLSF…RIIRTDWDAG (79 aa)) enclose the RRM domain.

Belongs to the RRM NCBP2 family. In terms of assembly, component of the nuclear cap-binding complex (CBC), a heterodimer composed of ncbp1/cbp80 and ncbp2/cbp20 that interacts with m7GpppG-capped RNA.

The protein localises to the nucleus. The protein resides in the cytoplasm. Functionally, component of the cap-binding complex (CBC), which binds co-transcriptionally to the 5' cap of pre-mRNAs and is involved in various processes such as pre-mRNA splicing, translation regulation, nonsense-mediated mRNA decay, RNA-mediated gene silencing (RNAi) by microRNAs (miRNAs) and mRNA export. The CBC complex is involved in mRNA export from the nucleus, leading to the recruitment of the mRNA export machinery to the 5' end of mRNA and to mRNA export in a 5' to 3' direction through the nuclear pore. The CBC complex is also involved in mediating U snRNA and intronless mRNAs export from the nucleus. The CBC complex is essential for a pioneer round of mRNA translation, before steady state translation when the CBC complex is replaced by cytoplasmic cap-binding protein eIF4E. The pioneer round of mRNA translation mediated by the CBC complex plays a central role in nonsense-mediated mRNA decay (NMD), NMD only taking place in mRNAs bound to the CBC complex, but not on eIF4E-bound mRNAs. The CBC complex enhances NMD in mRNAs containing at least one exon-junction complex (EJC), promoting the interaction between upf1 and upf2. The CBC complex is also involved in 'failsafe' NMD, which is independent of the EJC complex, while it does not participate in Staufen-mediated mRNA decay (SMD). During cell proliferation, the CBC complex is also involved in microRNAs (miRNAs) biogenesis via its interaction with srrt/ars2, thereby being required for miRNA-mediated RNA interference. The CBC complex also acts as a negative regulator of parn, thereby acting as an inhibitor of mRNA deadenylation. In the CBC complex, ncbp2/cbp20 recognizes and binds capped RNAs (m7GpppG-capped RNA) but requires ncbp1/cbp80 to stabilize the movement of its N-terminal loop and lock the CBC into a high affinity cap-binding state with the cap structure. The conventional cap-binding complex with NCBP2 binds both small nuclear RNA (snRNA) and messenger (mRNA) and is involved in their export from the nucleus. This chain is Nuclear cap-binding protein subunit 2 (ncbp2), found in Xenopus tropicalis (Western clawed frog).